A 353-amino-acid polypeptide reads, in one-letter code: Photosystem II protein D1 (353 aa).

T2 is subject to N-acetylthreonine. Position 2 is a phosphothreonine (T2). Transmembrane regions (helical) follow at residues 29-46 (YIGW…TATS), 118-133 (HFLL…EWEL), and 142-156 (WIAV…AATA). H118 is a chlorophyll a binding site. Y126 contacts pheophytin a. [CaMn4O5] cluster is bound by residues D170 and E189. Residues 197-218 (FHMLGVAGVFGGSLFSAMHGSL) form a helical membrane-spanning segment. H198 contacts chlorophyll a. A quinone-binding positions include H215 and 264–265 (SF). A Fe cation-binding site is contributed by H215. H272 lines the Fe cation pocket. Residues 274-288 (FLAAWPVVGIWFTAL) traverse the membrane as a helical segment. [CaMn4O5] cluster-binding residues include H332, E333, D342, and A344. Residues 345–353 (ALEVPYLNG) constitute a propeptide that is removed on maturation.

This sequence belongs to the reaction center PufL/M/PsbA/D family. PSII is composed of 1 copy each of membrane proteins PsbA, PsbB, PsbC, PsbD, PsbE, PsbF, PsbH, PsbI, PsbJ, PsbK, PsbL, PsbM, PsbT, PsbX, PsbY, PsbZ, Psb30/Ycf12, at least 3 peripheral proteins of the oxygen-evolving complex and a large number of cofactors. It forms dimeric complexes. The D1/D2 heterodimer binds P680, chlorophylls that are the primary electron donor of PSII, and subsequent electron acceptors. It shares a non-heme iron and each subunit binds pheophytin, quinone, additional chlorophylls, carotenoids and lipids. D1 provides most of the ligands for the Mn4-Ca-O5 cluster of the oxygen-evolving complex (OEC). There is also a Cl(-1) ion associated with D1 and D2, which is required for oxygen evolution. The PSII complex binds additional chlorophylls, carotenoids and specific lipids. is required as a cofactor. Post-translationally, phosphorylated in both bundle sheath and mesophyll cells, phosphorylation increases when cells are grown under high rather than low light regimes (70 vs 900 umol photons/m-2/s). PSII is subject to light-induced damage, in particular to D1. Damaged protein is degraded by Deg1 and FtsH proteases and replaced. In maize mesophyll cells D1 degradation is less extensive in grana (stacked) vs stroma (unstacked) lamellae, in part due to exclusion of FtsH from the grana. D1 degradation is faster in bundle sheath cells. In terms of processing, tyr-161 forms a radical intermediate that is referred to as redox-active TyrZ, YZ or Y-Z. Post-translationally, C-terminally processed by CTPA; processing is essential to allow assembly of the oxygen-evolving complex and thus photosynthetic growth.

Its subcellular location is the plastid. The protein localises to the chloroplast thylakoid membrane. It catalyses the reaction 2 a plastoquinone + 4 hnu + 2 H2O = 2 a plastoquinol + O2. Its function is as follows. Photosystem II (PSII) is a light-driven water:plastoquinone oxidoreductase that uses light energy to abstract electrons from H(2)O, generating O(2) and a proton gradient subsequently used for ATP formation. It consists of a core antenna complex that captures photons, and an electron transfer chain that converts photonic excitation into a charge separation. The D1/D2 (PsbA/PsbD) reaction center heterodimer binds P680, the primary electron donor of PSII as well as several subsequent electron acceptors. The chain is Photosystem II protein D1 from Zea mays (Maize).